The chain runs to 152 residues: Ribosome maturation factor RimP (152 aa).

Belongs to the RimP family.

Its subcellular location is the cytoplasm. Required for maturation of 30S ribosomal subunits. The sequence is that of Ribosome maturation factor RimP from Burkholderia vietnamiensis (strain G4 / LMG 22486) (Burkholderia cepacia (strain R1808)).